Consider the following 381-residue polypeptide: Chaperone protein DnaJ (381 aa).

Positions 4–69 (DYYEILGVTR…QKRAAYDRFG (66 aa)) constitute a J domain. The segment at 135–213 (GKTAQINIPS…CQGTRRVEKN (79 aa)) adopts a CR-type zinc-finger fold. Zn(2+) contacts are provided by cysteine 148, cysteine 151, cysteine 165, cysteine 168, cysteine 187, cysteine 190, cysteine 201, and cysteine 204. CXXCXGXG motif repeat units lie at residues 148 to 155 (CDACEGSG), 165 to 172 (CGTCHGAG), 187 to 194 (CPVCHGRG), and 201 to 208 (CPKCQGTR).

Belongs to the DnaJ family. Homodimer. The cofactor is Zn(2+).

It is found in the cytoplasm. In terms of biological role, participates actively in the response to hyperosmotic and heat shock by preventing the aggregation of stress-denatured proteins and by disaggregating proteins, also in an autonomous, DnaK-independent fashion. Unfolded proteins bind initially to DnaJ; upon interaction with the DnaJ-bound protein, DnaK hydrolyzes its bound ATP, resulting in the formation of a stable complex. GrpE releases ADP from DnaK; ATP binding to DnaK triggers the release of the substrate protein, thus completing the reaction cycle. Several rounds of ATP-dependent interactions between DnaJ, DnaK and GrpE are required for fully efficient folding. Also involved, together with DnaK and GrpE, in the DNA replication of plasmids through activation of initiation proteins. This Bartonella henselae (strain ATCC 49882 / DSM 28221 / CCUG 30454 / Houston 1) (Rochalimaea henselae) protein is Chaperone protein DnaJ.